A 314-amino-acid polypeptide reads, in one-letter code: Probable carboxylesterase 2 (314 aa).

Positions 79 to 81 (HGG) match the Involved in the stabilization of the negatively charged intermediate by the formation of the oxyanion hole motif. Residues serine 158, aspartate 254, and histidine 286 contribute to the active site.

Belongs to the 'GDXG' lipolytic enzyme family. Expressed in roots and flowers.

The catalysed reaction is a carboxylic ester + H2O = an alcohol + a carboxylate + H(+). Functionally, carboxylesterase acting on esters with varying acyl chain length. This chain is Probable carboxylesterase 2 (CXE2), found in Arabidopsis thaliana (Mouse-ear cress).